We begin with the raw amino-acid sequence, 162 residues long: SsrA-binding protein (162 aa).

Positions 140-162 are disordered; it reads DKRETAAKRDWSRQKSRLMKDHG.

It belongs to the SmpB family.

It is found in the cytoplasm. Functionally, required for rescue of stalled ribosomes mediated by trans-translation. Binds to transfer-messenger RNA (tmRNA), required for stable association of tmRNA with ribosomes. tmRNA and SmpB together mimic tRNA shape, replacing the anticodon stem-loop with SmpB. tmRNA is encoded by the ssrA gene; the 2 termini fold to resemble tRNA(Ala) and it encodes a 'tag peptide', a short internal open reading frame. During trans-translation Ala-aminoacylated tmRNA acts like a tRNA, entering the A-site of stalled ribosomes, displacing the stalled mRNA. The ribosome then switches to translate the ORF on the tmRNA; the nascent peptide is terminated with the 'tag peptide' encoded by the tmRNA and targeted for degradation. The ribosome is freed to recommence translation, which seems to be the essential function of trans-translation. This is SsrA-binding protein from Roseobacter denitrificans (strain ATCC 33942 / OCh 114) (Erythrobacter sp. (strain OCh 114)).